A 282-amino-acid polypeptide reads, in one-letter code: 2-dehydro-3-deoxyphosphooctonate aldolase (282 aa).

Belongs to the KdsA family.

The protein localises to the cytoplasm. The catalysed reaction is D-arabinose 5-phosphate + phosphoenolpyruvate + H2O = 3-deoxy-alpha-D-manno-2-octulosonate-8-phosphate + phosphate. It participates in carbohydrate biosynthesis; 3-deoxy-D-manno-octulosonate biosynthesis; 3-deoxy-D-manno-octulosonate from D-ribulose 5-phosphate: step 2/3. Its pathway is bacterial outer membrane biogenesis; lipopolysaccharide biosynthesis. The sequence is that of 2-dehydro-3-deoxyphosphooctonate aldolase from Shewanella amazonensis (strain ATCC BAA-1098 / SB2B).